The following is an 845-amino-acid chain: Protein translocase subunit SecA 1 (845 aa).

Residues Gln-85, 103–107 (GEGKT), and Asp-492 each bind ATP.

Belongs to the SecA family. As to quaternary structure, monomer and homodimer. Part of the essential Sec protein translocation apparatus which comprises SecA, SecYEG and auxiliary proteins SecDF. Other proteins may also be involved.

Its subcellular location is the cell membrane. The protein resides in the cytoplasm. It catalyses the reaction ATP + H2O + cellular proteinSide 1 = ADP + phosphate + cellular proteinSide 2.. Functionally, part of the Sec protein translocase complex. Interacts with the SecYEG preprotein conducting channel. Has a central role in coupling the hydrolysis of ATP to the transfer of proteins into and across the cell membrane, serving as an ATP-driven molecular motor driving the stepwise translocation of polypeptide chains across the membrane. The chain is Protein translocase subunit SecA 1 from Corynebacterium glutamicum (strain ATCC 13032 / DSM 20300 / JCM 1318 / BCRC 11384 / CCUG 27702 / LMG 3730 / NBRC 12168 / NCIMB 10025 / NRRL B-2784 / 534).